Consider the following 254-residue polypeptide: tRNA uridine(34) hydroxylase (254 aa).

A Rhodanese domain is found at 123 to 217 (QDPNVILLDT…YLESIPESES (95 aa)). The Cysteine persulfide intermediate role is filled by C177.

This sequence belongs to the TrhO family.

The enzyme catalyses uridine(34) in tRNA + AH2 + O2 = 5-hydroxyuridine(34) in tRNA + A + H2O. Functionally, catalyzes oxygen-dependent 5-hydroxyuridine (ho5U) modification at position 34 in tRNAs. In Legionella pneumophila (strain Paris), this protein is tRNA uridine(34) hydroxylase.